Here is a 209-residue protein sequence, read N- to C-terminus: Potassium-transporting ATPase KdpC subunit (209 aa).

The chain crosses the membrane as a helical span at residues 11 to 31 (MILALTVLTGLAYPLAVTAVA). The tract at residues 188-209 (AQAPTPRQPEPGHPEPGRPEVR) is disordered. Residues 197-209 (EPGHPEPGRPEVR) are compositionally biased toward basic and acidic residues.

Belongs to the KdpC family. In terms of assembly, the system is composed of three essential subunits: KdpA, KdpB and KdpC.

The protein resides in the cell inner membrane. Its function is as follows. Part of the high-affinity ATP-driven potassium transport (or Kdp) system, which catalyzes the hydrolysis of ATP coupled with the electrogenic transport of potassium into the cytoplasm. This subunit acts as a catalytic chaperone that increases the ATP-binding affinity of the ATP-hydrolyzing subunit KdpB by the formation of a transient KdpB/KdpC/ATP ternary complex. The sequence is that of Potassium-transporting ATPase KdpC subunit from Rhodospirillum centenum (strain ATCC 51521 / SW).